The primary structure comprises 523 residues: Synaptotagmin-10 (523 aa).

The Vesicular portion of the chain corresponds to 1–55 (MSFRKEDGVSSLCQKALHIITELCFAGQVEWDKCSGIFPADRSGQGGGGTDISVS). The segment at 13-35 (CQKALHIITELCFAGQVEWDKCS) is cysteine motif. Residues 56–76 (LLAVVVSFCGLALLVVSLFVF) form a helical membrane-spanning segment. Residues 77–523 (WKLCWPCWKS…CSSPRPPSTP (447 aa)) are Cytoplasmic-facing. Thr136 is subject to Phosphothreonine. C2 domains follow at residues 231 to 352 (TCGK…TVWK) and 363 to 496 (DLGE…THWH). Ca(2+) is bound by residues Asp262, Asp268, Asp320, Phe321, Asp322, Ser325, Asp328, Asp394, Asp400, Asp454, and Asp456.

It belongs to the synaptotagmin family. Homodimer; disulfide-linked via the cysteine motif. Can also form heterodimers with SYT3, SYT6, SYT7 and SYT9. Ca(2+) serves as cofactor.

It is found in the cytoplasmic vesicle. The protein localises to the secretory vesicle membrane. Functionally, ca(2+) sensor specifically required for the Ca(2+)-dependent exocytosis of secretory vesicles containing IGF1 in neurons of the olfactory bulb. Exocytosis of IGF1 is required for sensory perception of smell. Not involved in Ca(2+)-dependent synaptic vesicle exocytosis. Acts through Ca(2+) and phospholipid binding to the C2 domain: Ca(2+) induces binding of the C2-domains to phospholipid membranes and to assembled SNARE-complexes; both actions contribute to triggering exocytosis. The polypeptide is Synaptotagmin-10 (Syt10) (Rattus norvegicus (Rat)).